Here is a 212-residue protein sequence, read N- to C-terminus: Bilin biosynthesis protein PecF (212 aa).

This sequence belongs to the CpcE/RpcE/PecE family.

Functionally, an enzyme involved in the biosynthesis of bilin. The polypeptide is Bilin biosynthesis protein PecF (pecF) (Mastigocladus laminosus (Fischerella sp.)).